The primary structure comprises 349 residues: Draxin (349 aa).

Residues 1–25 (MAGPAIHTAPMLFLVLLLPLELSLA) form the signal peptide. Disordered regions lie at residues 38 to 79 (PENH…QDGA), 118 to 145 (PYPEKENRPPGWERTRKRSREHKRRRDR), and 244 to 273 (DGWPSAKKKEKHRGKLSSDGNETSPAEGEP). Positions 120–131 (PEKENRPPGWER) are enriched in basic and acidic residues. Composition is skewed to basic residues over residues 132 to 145 (TRKRSREHKRRRDR) and 249 to 258 (AKKKEKHRGK). N-linked (GlcNAc...) asparagine glycosylation is present at asparagine 264.

Belongs to the draxin family. As to quaternary structure, interacts with LRP6.

Its subcellular location is the secreted. Functionally, chemorepulsive axon guidance protein required for the development of spinal cord and forebrain commissures. Acts as a chemorepulsive guidance protein for commissural axons during development. Able to inhibit or repel neurite outgrowth from dorsal spinal cord. Inhibits the stabilization of cytosolic beta-catenin (CTNNB1) via its interaction with LRP6, thereby acting as an antagonist of Wnt signaling pathway. The protein is Draxin of Homo sapiens (Human).